Here is a 518-residue protein sequence, read N- to C-terminus: Cytochrome P450 26C1 (518 aa).

The chain crosses the membrane as a helical span at residues 293-313 (LLFAAFFTTASASTSLILLLL). Cys-455 is a binding site for heme.

Belongs to the cytochrome P450 family. Heme is required as a cofactor.

The protein localises to the membrane. The enzyme catalyses an organic molecule + reduced [NADPH--hemoprotein reductase] + O2 = an alcohol + oxidized [NADPH--hemoprotein reductase] + H2O + H(+). It catalyses the reaction all-trans-retinoate + reduced [NADPH--hemoprotein reductase] + O2 = all-trans-4-hydroxyretinoate + oxidized [NADPH--hemoprotein reductase] + H2O + H(+). It carries out the reaction all-trans-4-hydroxyretinoate + reduced [NADPH--hemoprotein reductase] + O2 = all-trans-4-oxoretinoate + oxidized [NADPH--hemoprotein reductase] + 2 H2O + H(+). The catalysed reaction is 9-cis-retinoate + reduced [NADPH--hemoprotein reductase] + O2 = 9-cis-4-hydroxyretinoate + oxidized [NADPH--hemoprotein reductase] + H2O + H(+). The enzyme catalyses 9-cis-4-hydroxyretinoate + reduced [NADPH--hemoprotein reductase] + O2 = 9-cis-4-oxoretinoate + oxidized [NADPH--hemoprotein reductase] + 2 H2O + H(+). It catalyses the reaction all-trans-4-hydroxy-13,14-dihydroretinoate + reduced [NADPH--hemoprotein reductase] + O2 = all-trans-4-oxo-13,14-dihydroretinoate + oxidized [NADPH--hemoprotein reductase] + 2 H2O + H(+). It carries out the reaction all-trans-13,14-dihydroretinoate + reduced [NADPH--hemoprotein reductase] + O2 = all-trans-4-hydroxy-13,14-dihydroretinoate + oxidized [NADPH--hemoprotein reductase] + H2O + H(+). A cytochrome P450 monooxygenase involved in the metabolism of retinoates (RAs), the active metabolites of vitamin A, and critical signaling molecules in animals. RAs exist as at least four different isomers: all-trans-RA (atRA), 9-cis-RA, 13-cis-RA, and 9,13-dicis-RA, where atRA is considered to be the biologically active isomer, although 9-cis-RA and 13-cis-RA also have activity. Catalyzes the oxidation of atRA primarily at C-4. Oxidation of atRA limits its biological activity and initiates a degradative process leading to its eventual elimination, thereby contributes to the regulation of atRA homeostasis and signaling. Able to metabolize other RAs such as 9-cis with high efficiency. Can oxidize all-trans-13,14-dihydroretinoate (DRA) to metabolites which could include all-trans-4-oxo-DRA, all-trans-4-hydroxy-DRA, all-trans-5,8-epoxy-DRA, and all-trans-18-hydroxy-DRA. Shares sequence similarity with other CYP26 family members, but has higher affinity to 9-cis-RA and is much less sensitive to the inhibitory effects of ketoconazole. In cooperation with Cyp26a1, contributes to the CNS patterning and the development of regions of higher visual acuity. The polypeptide is Cytochrome P450 26C1 (Mus musculus (Mouse)).